Here is a 443-residue protein sequence, read N- to C-terminus: Carboxypeptidase M (443 aa).

An N-terminal signal peptide occupies residues 1-17 (MDRARLWLGLLLPVVAA). In terms of domain architecture, Peptidase M14 spans 21 to 311 (RYHHQEGMEA…ASLIEYIKQV (291 aa)). N-linked (GlcNAc...) asparagine glycosylation occurs at Asn-38. Zn(2+)-binding residues include His-83 and Glu-86. 3 disulfide bridges follow: Cys-138–Cys-285, Cys-242–Cys-284, and Cys-341–Cys-410. Asn-164 carries an N-linked (GlcNAc...) asparagine glycan. His-190 lines the Zn(2+) pocket. Catalysis depends on Glu-281, which acts as the Proton donor/acceptor. The N-linked (GlcNAc...) asparagine glycan is linked to Asn-363. Ser-423 carries the GPI-anchor amidated serine lipid modification. The propeptide at 424–443 (AATKPSLGVFFMTLLYVFFK) is removed in mature form.

It belongs to the peptidase M14 family. The cofactor is Zn(2+).

The protein localises to the cell membrane. The catalysed reaction is Cleavage of C-terminal arginine or lysine residues from polypeptides.. Functionally, specifically removes C-terminal basic residues (Arg or Lys) from peptides and proteins. It is believed to play important roles in the control of peptide hormone and growth factor activity at the cell surface, and in the membrane-localized degradation of extracellular proteins. The protein is Carboxypeptidase M (Cpm) of Mus musculus (Mouse).